The primary structure comprises 135 residues: Large ribosomal subunit protein uL16 (135 aa).

It belongs to the universal ribosomal protein uL16 family. Part of the 50S ribosomal subunit.

Functionally, binds 23S rRNA and is also seen to make contacts with the A and possibly P site tRNAs. The polypeptide is Large ribosomal subunit protein uL16 (rplP) (Carsonella ruddii (strain PV)).